The chain runs to 111 residues: Dynein light chain Tctex-type (111 aa).

This sequence belongs to the dynein light chain Tctex-type family.

It localises to the cytoplasm. The protein localises to the cytoskeleton. Its function is as follows. Acts as a non-catalytic accessory component of a dynein complex. This chain is Dynein light chain Tctex-type (dlc1), found in Schizosaccharomyces pombe (strain 972 / ATCC 24843) (Fission yeast).